The following is an 87-amino-acid chain: Small ribosomal subunit protein uS15 (87 aa).

Belongs to the universal ribosomal protein uS15 family. Part of the 30S ribosomal subunit. Forms a bridge to the 50S subunit in the 70S ribosome, contacting the 23S rRNA.

One of the primary rRNA binding proteins, it binds directly to 16S rRNA where it helps nucleate assembly of the platform of the 30S subunit by binding and bridging several RNA helices of the 16S rRNA. In terms of biological role, forms an intersubunit bridge (bridge B4) with the 23S rRNA of the 50S subunit in the ribosome. The polypeptide is Small ribosomal subunit protein uS15 (Pseudothermotoga lettingae (strain ATCC BAA-301 / DSM 14385 / NBRC 107922 / TMO) (Thermotoga lettingae)).